We begin with the raw amino-acid sequence, 358 residues long: tRNA-specific 2-thiouridylase MnmA (358 aa).

ATP is bound by residues 6–13 (ALSGGVDS) and Met32. Cys103 functions as the Nucleophile in the catalytic mechanism. Cys103 and Cys201 are joined by a disulfide. Gly127 is a binding site for ATP. Positions 151-153 (KDQ) are interaction with tRNA. Residue Cys201 is the Cysteine persulfide intermediate of the active site.

Belongs to the MnmA/TRMU family.

Its subcellular location is the cytoplasm. It carries out the reaction S-sulfanyl-L-cysteinyl-[protein] + uridine(34) in tRNA + AH2 + ATP = 2-thiouridine(34) in tRNA + L-cysteinyl-[protein] + A + AMP + diphosphate + H(+). Its function is as follows. Catalyzes the 2-thiolation of uridine at the wobble position (U34) of tRNA, leading to the formation of s(2)U34. This Thermotoga sp. (strain RQ2) protein is tRNA-specific 2-thiouridylase MnmA.